The sequence spans 354 residues: Yop proteins translocation protein U (354 aa).

Residues 1 to 20 (MSGEKTEQPTPKKIRDARKK) form a disordered region. The next 5 membrane-spanning stretches (helical) occupy residues 30 to 50 (VSTALIVALSAMLMGLSDYYF), 79 to 99 (VLLEFFYLCFPLLTVAALMAI), 138 to 158 (VEFLKSILKVVLLSILIWIII), 163 to 183 (VTLLQLPTCGIECITPLLGQI), and 187 to 207 (LMVICTVGFVVISIADYAFEY).

This sequence belongs to the type III secretion exporter family.

It localises to the cell membrane. Its function is as follows. Component of the yop secretion machinery. The sequence is that of Yop proteins translocation protein U (yscU) from Yersinia pestis.